The sequence spans 351 residues: MTIAVGRAPQRGWFDILDDWLKRDRFVFVGWSGILLFPTAYLAIGGWLTGTTFVTSWYTHGIASSYLEGCNFLTAAVSTPADAMGHSLLLLWGPEAQGDFVRWCQLGGLWAFVALHGAFALIGFMLRQFEIARLVGIRPYNAIAFSGPIAVFVSVFLMYPLGQSSWFFAPSFGVAAIFRFLLFLQGFHNWTLNPFHMMGVAGILGGALLCAIHGATVENTLFEDGEQANTFKAFEPTQEEETYSMVTANRFWSQIFGIAFSNKRWLHFFMLFVPVMGLWTSSIGIIGLALNLRAYDFVSQEIRAAEDPEFETFYTKNILLNEGLRAWMAPADQPHENFVFPEEVLPRGNAL.

The chain crosses the membrane as a helical span at residues 39 to 59 (TAYLAIGGWLTGTTFVTSWYT). Chlorophyll a is bound at residue His-116. A helical transmembrane segment spans residues 123-139 (GFMLRQFEIARLVGIRP). Pheophytin a-binding residues include Gln-128 and Asn-141. Residues 151-164 (VFVSVFLMYPLGQS) traverse the membrane as a helical segment. His-196 contributes to the chlorophyll a binding site. A helical transmembrane segment spans residues 206–226 (GALLCAIHGATVENTLFEDGE). A plastoquinone contacts are provided by His-213 and Phe-260. His-213 contributes to the Fe cation binding site. His-267 lines the Fe cation pocket. The chain crosses the membrane as a helical span at residues 277-293 (GLWTSSIGIIGLALNLR).

It belongs to the reaction center PufL/M/PsbA/D family. PSII is composed of 1 copy each of membrane proteins PsbA, PsbB, PsbC, PsbD, PsbE, PsbF, PsbH, PsbI, PsbJ, PsbK, PsbL, PsbM, PsbT, PsbX, PsbY, PsbZ, Psb30/Ycf12, peripheral proteins PsbO, CyanoQ (PsbQ), PsbU, PsbV and a large number of cofactors. It forms dimeric complexes. The D1/D2 heterodimer binds P680, chlorophylls that are the primary electron donor of PSII, and subsequent electron acceptors. It shares a non-heme iron and each subunit binds pheophytin, quinone, additional chlorophylls, carotenoids and lipids. There is also a Cl(-1) ion associated with D1 and D2, which is required for oxygen evolution. The PSII complex binds additional chlorophylls, carotenoids and specific lipids. is required as a cofactor.

The protein resides in the cellular thylakoid membrane. The catalysed reaction is 2 a plastoquinone + 4 hnu + 2 H2O = 2 a plastoquinol + O2. Functionally, photosystem II (PSII) is a light-driven water:plastoquinone oxidoreductase that uses light energy to abstract electrons from H(2)O, generating O(2) and a proton gradient subsequently used for ATP formation. It consists of a core antenna complex that captures photons, and an electron transfer chain that converts photonic excitation into a charge separation. The D1/D2 (PsbA/PsbD) reaction center heterodimer binds P680, the primary electron donor of PSII as well as several subsequent electron acceptors. D2 is needed for assembly of a stable PSII complex. This is Photosystem II D2 protein from Parasynechococcus marenigrum (strain WH8102).